The following is a 348-amino-acid chain: ATPase GET3 (348 aa).

26–33 is a binding site for ATP; it reads KGGVGKTT. Residue aspartate 57 is part of the active site. ATP is bound by residues glutamate 241 and asparagine 268. Residues cysteine 280 and cysteine 283 each contribute to the Zn(2+) site. Position 310–312 (310–312) interacts with ATP; the sequence is PLL.

Belongs to the arsA ATPase family. Homodimer. Component of the Golgi to ER traffic (GET) complex, which is composed of GET1, GET2 and GET3. Within the complex, GET1 and GET2 form a heterotetramer which is stabilized by phosphatidylinositol binding and which binds to the GET3 homodimer. Interacts with the chloride channel protein GEF1.

The protein localises to the cytoplasm. It localises to the endoplasmic reticulum. The protein resides in the golgi apparatus. Its function is as follows. ATPase required for the post-translational delivery of tail-anchored (TA) proteins to the endoplasmic reticulum. Recognizes and selectively binds the transmembrane domain of TA proteins in the cytosol. This complex then targets to the endoplasmic reticulum by membrane-bound receptors GET1 and GET2, where the tail-anchored protein is released for insertion. This process is regulated by ATP binding and hydrolysis. ATP binding drives the homodimer towards the closed dimer state, facilitating recognition of newly synthesized TA membrane proteins. ATP hydrolysis is required for insertion. Subsequently, the homodimer reverts towards the open dimer state, lowering its affinity for the GET1-GET2 receptor, and returning it to the cytosol to initiate a new round of targeting. Cooperates with the HDEL receptor ERD2 to mediate the ATP-dependent retrieval of resident ER proteins that contain a C-terminal H-D-E-L retention signal from the Golgi to the ER. Involved in low-level resistance to the oxyanions arsenite and arsenate, and in heat tolerance. In Debaryomyces hansenii (strain ATCC 36239 / CBS 767 / BCRC 21394 / JCM 1990 / NBRC 0083 / IGC 2968) (Yeast), this protein is ATPase GET3.